We begin with the raw amino-acid sequence, 121 residues long: Flagellar protein FliT (121 aa).

Positions 1 to 50 are required for homodimerization; that stretch reads MNHAPHLYFAWQQLVEKSQLMLRLATEEQWDELIASEMAYVNAVQEIAHL. Residues 60–98 form a fliD binding region; sequence MQEQLRPMLRLILDNESKVKQLLQIRMDELAKLVGQSSV.

Belongs to the FliT family. Homodimer. Interacts with FliD and FlhC.

It localises to the cytoplasm. The protein localises to the cytosol. In terms of biological role, dual-function protein that regulates the transcription of class 2 flagellar operons and that also acts as an export chaperone for the filament-capping protein FliD. As a transcriptional regulator, acts as an anti-FlhDC factor; it directly binds FlhC, thus inhibiting the binding of the FlhC/FlhD complex to class 2 promoters, resulting in decreased expression of class 2 flagellar operons. As a chaperone, effects FliD transition to the membrane by preventing its premature polymerization, and by directing it to the export apparatus. In Escherichia coli O157:H7, this protein is Flagellar protein FliT.